A 344-amino-acid chain; its full sequence is L-rhamnose-proton symporter (344 aa).

Helical transmembrane passes span 4–24 (AITMGIFWHLIGAASAACFYA), 38–58 (WSVGGIVSWLILPWAISALLL), 68–88 (FNLSTLLPVFLFGAMWGIGNI), 101–121 (MGIGIAIGITLIVGTLMTPII), 137–157 (TLLGVFVALIGVGIVTRAGQL), 175–195 (LLLAVMCGIFSAGMSFAMNAA), 214–234 (LPSYVVIMGGGALVNLGFCFI), 259–279 (ILLSALGGLMWYLQFFFYAWG), 290–310 (MSWMLHMSFYVLCGGLVGLVL), and 321–341 (VAVLSLGCVVIIIAANIVGLG).

It belongs to the L-rhamnose transporter (TC 2.A.7.6) family.

The protein localises to the cell inner membrane. It carries out the reaction L-rhamnopyranose(in) + H(+)(in) = L-rhamnopyranose(out) + H(+)(out). Its function is as follows. Uptake of L-rhamnose across the cytoplasmic membrane with the concomitant transport of protons into the cell (symport system). In Salmonella dublin (strain CT_02021853), this protein is L-rhamnose-proton symporter.